The primary structure comprises 1074 residues: DNA double-strand break repair Rad50 ATPase (1074 aa).

Residues Arg12, 32-38 (NGSGKSS), and Gln142 contribute to the ATP site. Coiled-coil stretches lie at residues 355–402 (ELEK…REKA) and 452–506 (NLVE…KGLG). In terms of domain architecture, Zinc-hook spans 512 to 611 (LENLEDFSEL…KITRLKDAKK (100 aa)). Zn(2+)-binding residues include Cys559 and Cys562. 4 coiled-coil regions span residues 574–611 (TAEE…DAKK), 649–678 (LKLE…LQVQ), 749–823 (KEKL…EILE), and 865–895 (TEEK…LKAL). Residue 973 to 978 (LLSGGE) participates in ATP binding.

The protein belongs to the SMC family. RAD50 subfamily. In terms of assembly, homodimer. Forms a heterotetramer composed of two Mre11 subunits and two Rad50 subunits. Zn(2+) serves as cofactor.

Functionally, part of the Rad50/Mre11 complex, which is involved in the early steps of DNA double-strand break (DSB) repair. The complex may facilitate opening of the processed DNA ends to aid in the recruitment of HerA and NurA. Rad50 controls the balance between DNA end bridging and DNA resection via ATP-dependent structural rearrangements of the Rad50/Mre11 complex. This chain is DNA double-strand break repair Rad50 ATPase, found in Methanosarcina acetivorans (strain ATCC 35395 / DSM 2834 / JCM 12185 / C2A).